The sequence spans 960 residues: Valine--tRNA ligase (960 aa).

The 'HIGH' region motif lies at 42-52 (PNITGNLHMGH). The 'KMSKS' region motif lies at 553-557 (KMSKS). Lys-556 serves as a coordination point for ATP. Positions 879–950 (VLKAIDKEIE…LSQQLESLHD (72 aa)) form a coiled coil.

Belongs to the class-I aminoacyl-tRNA synthetase family. ValS type 1 subfamily. Monomer.

It localises to the cytoplasm. The catalysed reaction is tRNA(Val) + L-valine + ATP = L-valyl-tRNA(Val) + AMP + diphosphate. Functionally, catalyzes the attachment of valine to tRNA(Val). As ValRS can inadvertently accommodate and process structurally similar amino acids such as threonine, to avoid such errors, it has a 'posttransfer' editing activity that hydrolyzes mischarged Thr-tRNA(Val) in a tRNA-dependent manner. This Buchnera aphidicola subsp. Schizaphis graminum (strain Sg) protein is Valine--tRNA ligase.